Here is a 2120-residue protein sequence, read N- to C-terminus: Alpha-tectorin (2120 aa).

Positions 1-24 (MNTRSLLSAWAALLVVTVRHRAHA) are cleaved as a signal peptide. Asn-34, Asn-215, Asn-258, Asn-277, Asn-445, and Asn-496 each carry an N-linked (GlcNAc...) asparagine glycan. The NIDO domain maps to 98-252 (PFCGDVANGI…GRWAFKIDGR (155 aa)). Residues 260-312 (SLRGQFLHQGEIFWENSNCSTKCRCLDFNNEIFCQEMLAPFETVEPKIKFFQC) enclose the VWFC domain. The 174-residue stretch at 317–490 (TACVVFGDPH…RVPHPERKCS (174 aa)) folds into the VWFD 1 domain. Cystine bridges form between Cys-319/Cys-451 and Cys-341/Cys-489. The TIL 1 domain occupies 578–620 (PGHSHYSGCASGCPATCSDLTAPLRCTAPCPEGCECDDGHVLS). Asn-666, Asn-792, Asn-822, Asn-834, Asn-877, Asn-899, Asn-907, and Asn-928 each carry an N-linked (GlcNAc...) asparagine glycan. Residues 690–865 (GLCSVGQNQV…SWTTFDEICN (176 aa)) enclose the VWFD 2 domain. Cys-692 and Cys-828 are disulfide-bonded. The region spanning 963 to 1013 (CPENSHFEECMSCVETCETLATGCCMDTCTEGCQCDEGFALRSPCVPRGEC) is the TIL 2 domain. Asn-1025, Asn-1041, Asn-1207, and Asn-1337 each carry an N-linked (GlcNAc...) asparagine glycan. Residues 1066–1250 (ASCIVSGYGH…SWAKRDTFCR (185 aa)) enclose the VWFD 3 domain. Disulfide bonds link Cys-1068–Cys-1213 and Cys-1090–Cys-1249. Residues 1345 to 1398 (CPPNSHYESCVSLCQPRCAAIRLKSDCGHYCVEGCQCDPGYVLNGKSCILPQNC) enclose the TIL 3 domain. The region spanning 1458-1633 (SFCLAAGGGV…KTNGMQKSCN (176 aa)) is the VWFD 4 domain. Cystine bridges form between Cys-1460/Cys-1594, Cys-1482/Cys-1632, Cys-1684/Cys-1742, Cys-1708/Cys-1751, Cys-1753/Cys-1785, Cys-1773/Cys-1865, and Cys-1804/Cys-1824. N-linked (GlcNAc...) asparagine glycans are attached at residues Asn-1511, Asn-1537, Asn-1723, Asn-1739, Asn-1761, Asn-1818, Asn-1831, Asn-1847, Asn-1887, and Asn-1906. The 255-residue stretch at 1772–2026 (TCKAAQMEVS…YSCKINCPQH (255 aa)) folds into the ZP domain. 3 cysteine pairs are disulfide-bonded: Cys-1947/Cys-2007, Cys-1968/Cys-2023, and Cys-2012/Cys-2019. The GPI-anchor amidated asparagine moiety is linked to residue Asn-2058. Residues 2059–2120 (GGCEQICTSQ…LWAALHDPTS (62 aa)) constitute a propeptide, removed in mature form.

In terms of assembly, may form homomeric filament after self-association or heteromeric filament after association with beta-tectorin. In terms of processing, at least 3 products of tectorin seem to exist: HMM, MMM and LMM. They may be generated by active processing or the result of proteolysis occurring between intrachain disulfide bonds. Post-translationally, the presence of a hydrophobic C-terminus preceded by a potential cleavage site strongly suggests that tectorins are synthesized as glycosylphosphatidylinositol-linked, membrane-bound precursors. Tectorins are targeted to the apical surface of the inner ear epithelia by the lipid and proteolytically released into the extracellular compartment. As to expression, expressed in the inner ear.

It localises to the cell membrane. The protein localises to the secreted. The protein resides in the extracellular space. It is found in the extracellular matrix. Its function is as follows. One of the major non-collagenous components of the tectorial membrane. The tectorial membrane is an extracellular matrix of the inner ear that covers the neuroepithelium of the cochlea and contacts the stereocilia bundles of specialized sensory hair cells. Sound induces movement of these hair cells relative to the tectorial membrane, deflects the stereocilia and leads to fluctuations in hair-cell membrane potential, transducing sound into electrical signals. The sequence is that of Alpha-tectorin (TECTA) from Gallus gallus (Chicken).